Reading from the N-terminus, the 259-residue chain is Glutathione S-transferase domain-containing protein DDB_G0274705 (259 aa).

One can recognise a GST N-terminal domain in the interval 7 to 96 (KIDYIFYTNN…YLAQKFNTFL (90 aa)). The GST C-terminal domain occupies 102–232 (NPLENSEVIT…GFKNFNPSLL (131 aa)).

Belongs to the GST superfamily.

The polypeptide is Glutathione S-transferase domain-containing protein DDB_G0274705 (Dictyostelium discoideum (Social amoeba)).